Consider the following 140-residue polypeptide: Organic hydroperoxide resistance protein-like (140 aa).

It belongs to the OsmC/Ohr family.

This Staphylococcus aureus (strain MSSA476) protein is Organic hydroperoxide resistance protein-like.